Consider the following 702-residue polypeptide: Autophagy-related protein 9 (702 aa).

At 1–205 (MFYQPAQNKK…GKGLSCIIVH (205 aa)) the chain is on the cytoplasmic side. A disordered region spans residues 35 to 128 (QESLDSDEDE…SKQKPALPNF (94 aa)). Residues 38 to 47 (LDSDEDESSP) are compositionally biased toward acidic residues. Positions 94–107 (SSKVPSKHPSPSFP) are enriched in low complexity. Residues 108-120 (ETTSLRNLQNGSK) are compositionally biased toward polar residues. The helical transmembrane segment at 206 to 223 (RLFQILTVSFVIGFTTFI) threads the bilayer. The Lumenal segment spans residues 224–251 (TSCIDWPAVTPHGSLAGVTKSQCIAQMS). The chain crosses the membrane as a helical span at residues 252-270 (PITYLVLWLFLSFLLALWI). At 271–421 (YYLTDIPRLW…RRRFIVAGFL (151 aa)) the chain is on the cytoplasmic side. The stretch at 422-446 (NCLFAPIVAIYLVIHNFFRYFNEYH) is an intramembrane region. Residues 447–496 (KNPGALSTRRYTPLALWTFREYNELQHFFDERINDSYAAASHYVSQFPDF) lie on the Cytoplasmic side of the membrane. Residues 497–522 (NMIRLFKYISFILGSFTAILVIITVF) form a helical membrane-spanning segment. Over 523–537 (DPELMVTFEITKDRS) the chain is Lumenal. Residues 538-555 (VLFYLGLFGSLIAVSRSI) form a helical membrane-spanning segment. The Cytoplasmic portion of the chain corresponds to 556-603 (IPDETLVFAPEKALRRVITFTHYMPGWWSDNMHSKAVQQEFCSLYSYR). Residues 604–624 (IVNLLWEILGILLTPVLLFFT) lie within the membrane without spanning it. Topologically, residues 625–702 (FPSCSQDIVD…NTEAPRRDLR (78 aa)) are cytoplasmic.

It belongs to the ATG9 family. In terms of assembly, homotrimer; forms a homotrimer with a central pore that forms a path between the two membrane leaflets. Interacts with ctl1. Phosphorylated by atg1. Atg1 phosphorylation is required for preautophagosome elongation.

The protein localises to the preautophagosomal structure membrane. It localises to the cytoplasmic vesicle membrane. The protein resides in the golgi apparatus membrane. It is found in the endoplasmic reticulum membrane. The catalysed reaction is a 1,2-diacyl-sn-glycero-3-phosphocholine(in) = a 1,2-diacyl-sn-glycero-3-phosphocholine(out). It catalyses the reaction a 1,2-diacyl-sn-glycero-3-phospho-L-serine(in) = a 1,2-diacyl-sn-glycero-3-phospho-L-serine(out). It carries out the reaction a 1,2-diacyl-sn-glycero-3-phosphoethanolamine(in) = a 1,2-diacyl-sn-glycero-3-phosphoethanolamine(out). The enzyme catalyses a 1,2-diacyl-sn-glycero-3-phospho-(1D-myo-inositol-3-phosphate)(in) = a 1,2-diacyl-sn-glycero-3-phospho-(1D-myo-inositol-3-phosphate)(out). Functionally, phospholipid scramblase involved in autophagy and cytoplasm to vacuole transport (Cvt) vesicle formation. Cycles between the preautophagosomal structure/phagophore assembly site (PAS) and the cytoplasmic vesicle pool and supplies membrane for the growing autophagosome. Lipid scramblase activity plays a key role in preautophagosomal structure/phagophore assembly by distributing the phospholipids that arrive through atg2 from the cytoplasmic to the luminal leaflet of the bilayer, thereby driving autophagosomal membrane expansion. Also involved in endoplasmic reticulum-specific autophagic process and is essential for the survival of cells subjected to severe ER stress. Different machineries are required for anterograde trafficking to the PAS during either the Cvt pathway or bulk autophagy and for retrograde trafficking. Has a role in meiosis and sporulation. This is Autophagy-related protein 9 from Schizosaccharomyces pombe (strain 972 / ATCC 24843) (Fission yeast).